The following is a 452-amino-acid chain: Putative purine permease CPE0397 (452 aa).

Helical transmembrane passes span 34 to 54 (IFAAFGGIIVVPLVIATSLGF), 58 to 78 (VTTALISASILGSGLATIIQA), 83 to 103 (KVGARVACIMGTDFTFVSPAI), 108 to 128 (VLGLPGIIGATILGSLFEVIL), 138 to 158 (FFPPLVTGTVVALIGLTLLPV), 172 to 192 (YASLENLAVAMFVLVITLLLN), 201 to 221 (SASILIGIVVGYIVCIPLGLV), 250 to 270 (MAFIPAYFVATIGTVGCLKAI), 326 to 346 (AVMAGILLVILGFLPKVAAII), 348 to 368 (GIPNPVLGGVGIMMFGTVAAA), 383 to 403 (LLIIAISMGLGLGVTFRPDVI), and 412 to 432 (MIFSSGISTGTIAALILNAVL).

The protein belongs to the nucleobase:cation symporter-2 (NCS2) (TC 2.A.40) family.

The protein resides in the cell membrane. This is Putative purine permease CPE0397 (cpx) from Clostridium perfringens (strain 13 / Type A).